Consider the following 240-residue polypeptide: Citrate synthase-lysine N-methyltransferase CSKMT, mitochondrial (240 aa).

The N-terminal 21 residues, 1–21, are a transit peptide targeting the mitochondrion; that stretch reads MAALRRMLHLPRLTMGTCRPF.

Belongs to the methyltransferase superfamily.

It is found in the mitochondrion. It catalyses the reaction L-lysyl-[citrate synthase] + S-adenosyl-L-methionine = N(6)-methyl-L-lysyl-[citrate synthase] + S-adenosyl-L-homocysteine + H(+). The enzyme catalyses N(6)-methyl-L-lysyl-[citrate synthase] + S-adenosyl-L-methionine = N(6),N(6)-dimethyl-L-lysyl-[citrate synthase] + S-adenosyl-L-homocysteine + H(+). It carries out the reaction N(6),N(6)-dimethyl-L-lysyl-[citrate synthase] + S-adenosyl-L-methionine = N(6),N(6),N(6)-trimethyl-L-lysyl-[citrate synthase] + S-adenosyl-L-homocysteine + H(+). Citrate synthase-lysine methyltransferase activity is inhibited by S-adenosylhomocysteine (AdoHcy) and oxaloacetate (OAA). In terms of biological role, protein-lysine methyltransferase that selectively trimethylates citrate synthase (CS) in mitochondria. Seems to conduct trimethylation in a highly distributive manner rather than in a processive manner, and thus introduces a single methyl group per binding event. The chain is Citrate synthase-lysine N-methyltransferase CSKMT, mitochondrial from Pongo abelii (Sumatran orangutan).